We begin with the raw amino-acid sequence, 120 residues long: Holo-[acyl-carrier-protein] synthase (120 aa).

2 residues coordinate Mg(2+): Asp-8 and Glu-60.

This sequence belongs to the P-Pant transferase superfamily. AcpS family. The cofactor is Mg(2+).

The protein resides in the cytoplasm. It carries out the reaction apo-[ACP] + CoA = holo-[ACP] + adenosine 3',5'-bisphosphate + H(+). In terms of biological role, transfers the 4'-phosphopantetheine moiety from coenzyme A to a Ser of acyl-carrier-protein. The chain is Holo-[acyl-carrier-protein] synthase from Anaplasma marginale (strain St. Maries).